The chain runs to 196 residues: Peptide methionine sulfoxide reductase MsrA 2 (196 aa).

Residue Cys-36 is part of the active site.

The protein belongs to the MsrA Met sulfoxide reductase family.

It catalyses the reaction L-methionyl-[protein] + [thioredoxin]-disulfide + H2O = L-methionyl-(S)-S-oxide-[protein] + [thioredoxin]-dithiol. The enzyme catalyses [thioredoxin]-disulfide + L-methionine + H2O = L-methionine (S)-S-oxide + [thioredoxin]-dithiol. Has an important function as a repair enzyme for proteins that have been inactivated by oxidation. Catalyzes the reversible oxidation-reduction of methionine sulfoxide in proteins to methionine. The chain is Peptide methionine sulfoxide reductase MsrA 2 (msrA2) from Caulobacter vibrioides (strain ATCC 19089 / CIP 103742 / CB 15) (Caulobacter crescentus).